We begin with the raw amino-acid sequence, 160 residues long: Periplasmic nitrate reductase, electron transfer subunit (160 aa).

The N-terminal stretch at 1 to 25 (MKTRIIFAALALAAAMPLLVSGVFA) is a signal peptide. The heme c site is built by His73, Cys87, Cys90, His91, His108, Cys127, Cys130, and His131.

The protein belongs to the NapB family. In terms of assembly, component of the periplasmic nitrate reductase NapAB complex composed of NapA and NapB. Binds 2 heme C groups per subunit.

Its subcellular location is the periplasm. Electron transfer subunit of the periplasmic nitrate reductase complex NapAB. Receives electrons from the membrane-anchored tetraheme c-type NapC protein and transfers these to NapA subunit, thus allowing electron flow between membrane and periplasm. Essential for periplasmic nitrate reduction with nitrate as the terminal electron acceptor. The sequence is that of Periplasmic nitrate reductase, electron transfer subunit from Azospirillum brasilense.